The sequence spans 216 residues: NADH-quinone oxidoreductase subunit C (216 aa).

The protein belongs to the complex I 30 kDa subunit family. As to quaternary structure, NDH-1 is composed of 14 different subunits. Subunits NuoB, C, D, E, F, and G constitute the peripheral sector of the complex.

Its subcellular location is the cell inner membrane. The catalysed reaction is a quinone + NADH + 5 H(+)(in) = a quinol + NAD(+) + 4 H(+)(out). Its function is as follows. NDH-1 shuttles electrons from NADH, via FMN and iron-sulfur (Fe-S) centers, to quinones in the respiratory chain. The immediate electron acceptor for the enzyme in this species is believed to be ubiquinone. Couples the redox reaction to proton translocation (for every two electrons transferred, four hydrogen ions are translocated across the cytoplasmic membrane), and thus conserves the redox energy in a proton gradient. The sequence is that of NADH-quinone oxidoreductase subunit C from Francisella tularensis subsp. tularensis (strain FSC 198).